Reading from the N-terminus, the 145-residue chain is uncharacterized protein (145 aa).

The interval 71–95 (GARGRGRTYTKGGSSRSPASWAEQG) is disordered.

This is an uncharacterized protein from Homo sapiens (Human).